Reading from the N-terminus, the 306-residue chain is Methyl-CpG-binding domain-containing protein 7 (306 aa).

Polar residues predominate over residues 1–11 (MQTRSSSSPSA). The interval 1–21 (MQTRSSSSPSANHRRETQLQI) is disordered. 3 consecutive MBD domains span residues 21–92 (IADP…QDKT), 106–171 (GVEY…RVLQ), and 172–242 (NRRG…ERLP). Arg118, Arg145, and Arg174 each carry asymmetric dimethylarginine. The required for interaction with PRMT11 stretch occupies residues 163-306 (IEQQLRVLQN…AFVSLIEDRS (144 aa)).

In terms of assembly, interacts with PRMT11. Interacts (via C-terminus) with IDM2, but not with IDM1. Interacts with IDM3. Part of a complex made of MBD7, IDM1, IDM2 and IDM3. Methylated by PRMT11. As to expression, expressed in leaves, buds, flowers, stems, siliques, mature seeds and roots.

The protein localises to the nucleus. It is found in the chromosome. In terms of biological role, transcriptional regulator that binds CpG islands in promoters where the DNA is methylated at position 5 of cytosine within CpG dinucleotides. May directly affect chromatin structure by inducing intra- and inter- chromatin compaction via bridging over multiple methylated CpG sites. Acts as an anti-silencing factor that prevents DNA hypermethylation and gene repression. Requires high mCG density for binding. Recognizes preferentially mCGs located in transposable elements. Required for active DNA demethylation. Prefers to target genomic loci around chromocenters. This Arabidopsis thaliana (Mouse-ear cress) protein is Methyl-CpG-binding domain-containing protein 7.